The sequence spans 346 residues: Dihydroorotase (346 aa).

H14 and H16 together coordinate Zn(2+). Residues 16-18 (HLR) and N42 each bind substrate. Positions 100, 137, and 175 each coordinate Zn(2+). K100 is subject to N6-carboxylysine. H137 lines the substrate pocket. A substrate-binding site is contributed by L220. D248 lines the Zn(2+) pocket. Residue D248 is part of the active site. Residues H252 and A264 each contribute to the substrate site.

The protein belongs to the metallo-dependent hydrolases superfamily. DHOase family. Class II DHOase subfamily. Homodimer. Zn(2+) serves as cofactor.

It carries out the reaction (S)-dihydroorotate + H2O = N-carbamoyl-L-aspartate + H(+). Its pathway is pyrimidine metabolism; UMP biosynthesis via de novo pathway; (S)-dihydroorotate from bicarbonate: step 3/3. Functionally, catalyzes the reversible cyclization of carbamoyl aspartate to dihydroorotate. The sequence is that of Dihydroorotase from Ruegeria pomeroyi (strain ATCC 700808 / DSM 15171 / DSS-3) (Silicibacter pomeroyi).